A 334-amino-acid chain; its full sequence is Biotin synthase (334 aa).

The Radical SAM core domain maps to 48–275 (NQVQTSQLLS…RSMVRLSAGR (228 aa)). 3 residues coordinate [4Fe-4S] cluster: Cys63, Cys67, and Cys70. [2Fe-2S] cluster contacts are provided by Cys107, Cys138, Cys198, and Arg270.

The protein belongs to the radical SAM superfamily. Biotin synthase family. In terms of assembly, homodimer. [4Fe-4S] cluster is required as a cofactor. The cofactor is [2Fe-2S] cluster.

It catalyses the reaction (4R,5S)-dethiobiotin + (sulfur carrier)-SH + 2 reduced [2Fe-2S]-[ferredoxin] + 2 S-adenosyl-L-methionine = (sulfur carrier)-H + biotin + 2 5'-deoxyadenosine + 2 L-methionine + 2 oxidized [2Fe-2S]-[ferredoxin]. The protein operates within cofactor biosynthesis; biotin biosynthesis; biotin from 7,8-diaminononanoate: step 2/2. Functionally, catalyzes the conversion of dethiobiotin (DTB) to biotin by the insertion of a sulfur atom into dethiobiotin via a radical-based mechanism. The sequence is that of Biotin synthase from Maricaulis maris (strain MCS10) (Caulobacter maris).